The sequence spans 143 residues: Large ribosomal subunit protein uL16 (143 aa).

Belongs to the universal ribosomal protein uL16 family. In terms of assembly, part of the 50S ribosomal subunit.

Functionally, binds 23S rRNA and is also seen to make contacts with the A and possibly P site tRNAs. In Sphingopyxis alaskensis (strain DSM 13593 / LMG 18877 / RB2256) (Sphingomonas alaskensis), this protein is Large ribosomal subunit protein uL16.